We begin with the raw amino-acid sequence, 113 residues long: MKLKNNLLEKTLELSELFKIYKELLTDKQKQYFELYIDEDLSLSEIADEFNISKTAVYDSISKTSKLLFSLETKLHLKQKQDLLISLINKIETNQIDEKQFIKSLKEVIWWKY.

The protein belongs to the UPF0122 family.

Its function is as follows. Might take part in the signal recognition particle (SRP) pathway. This is inferred from the conservation of its genetic proximity to ftsY/ffh. May be a regulatory protein. This Mycoplasma mycoides protein is Probable UPF0122 protein.